A 645-amino-acid chain; its full sequence is Sodium/hydrogen exchanger 9 (645 aa).

Topologically, residues 1-20 (MERQSRVMSEKDEYQFQHQG) are lumenal. Residues 21 to 41 (AVELLVFNFLLILTILTIWLF) form a helical membrane-spanning segment. Residues 42–45 (KNHR) are Cytoplasmic-facing. The helical transmembrane segment at 46 to 66 (FRFLHETGGAMVYGLIMGLIL) threads the bilayer. At 67–126 (RYATAPTDIESGTVYDCVKLTFSPSTLLVNITDQVYEYKYKREISQHNINPHQGNAILEK) the chain is on the lumenal side. Residue Asn96 is glycosylated (N-linked (GlcNAc...) asparagine). A helical membrane pass occupies residues 127-147 (MTFDPEIFFNVLLPPIIFHAG). The Cytoplasmic portion of the chain corresponds to 148–164 (YSLKKRHFFQNLGSILT). The helical transmembrane segment at 165–185 (YAFLGTAISCIVIGLIMYGFV) threads the bilayer. Residues 186-203 (KAMIHAGQLKNGDFHFTD) lie on the Lumenal side of the membrane. The chain crosses the membrane as a helical span at residues 204–224 (CLFFGSLMSATDPVTVLAIFH). The Cytoplasmic segment spans residues 225–235 (ELHVDPDLYTL). The helical transmembrane segment at 236–256 (LFGESVLNDAVAIVLTYSISI) threads the bilayer. The Lumenal portion of the chain corresponds to 257–277 (YSPKENPNAFDAAAFFQSVGN). A helical transmembrane segment spans residues 278–298 (FLGIFAGSFAMGSAYAIITAL). Over 299–301 (LTK) the chain is Cytoplasmic. Helical transmembrane passes span 302 to 322 (FTKL…LSWS) and 323 to 343 (AFLS…FCGV). Residues 344-364 (TQAHYTYNNLSSDSKIRTKQL) are Cytoplasmic-facing. Residues 365–385 (FEFMNFLAENVIFCYMGLALF) traverse the membrane as a helical segment. Thr386 is a topological domain (lumenal). A helical transmembrane segment spans residues 387 to 407 (FQNHIFNALFILGAFLAIFVA). The Cytoplasmic segment spans residues 408–429 (RACNIYPLSFLLNLGRKQKIPW). The helical transmembrane segment at 430-450 (NFQHMMMFSGLRGAIAFALAI) threads the bilayer. Residues 451 to 465 (RNTESQPKQMMFTTT) lie on the Lumenal side of the membrane. A helical transmembrane segment spans residues 466 to 486 (LLLVFFTVWVFGGGTTPMLTW). Residues 487–645 (LQIRVGVDLD…EQTLGQSQLN (159 aa)) lie on the Cytoplasmic side of the membrane. Residues 594 to 622 (QASSPCSPPARLGLDQKASPQTPGKENIY) are disordered.

This sequence belongs to the monovalent cation:proton antiporter 1 (CPA1) transporter (TC 2.A.36) family. Homodimer; phosphatidylinositol-4,5-bisphosphate (PIP2) and phosphatidylinositol 3,4,5-trisphosphate (PIP3) could be involved in the dimer stabilization. Interacts (via the C-terminus) with RACK1. Interacts with CHP1. In terms of tissue distribution, ubiquitously expressed in all tissues tested. Expressed at highest levels in heart and skeletal muscle, followed by placenta, kidney, and liver. Expressed in the brain, in the medulla and spinal cord.

Its subcellular location is the late endosome membrane. It localises to the early endosome membrane. It is found in the recycling endosome membrane. The protein localises to the cell membrane. The protein resides in the cytoplasmic vesicle. Its subcellular location is the phagosome membrane. It carries out the reaction Na(+)(in) + H(+)(out) = Na(+)(out) + H(+)(in). The catalysed reaction is K(+)(in) + H(+)(out) = K(+)(out) + H(+)(in). Endosomal Na(+), K(+)/H(+) antiporter. Mediates the electroneutral exchange of endosomal luminal H(+) for a cytosolic Na(+) or K(+). By facilitating proton efflux, SLC9A9 counteracts the acidity generated by vacuolar (V)-ATPase, thereby limiting luminal acidification. Regulates organellar pH and consequently, e.g., endosome maturation and endocytic trafficking of plasma membrane receptors and neurotransporters. Promotes the recycling of transferrin receptors back to the cell surface to facilitate additional iron uptake in the brain. Regulates synaptic transmission by regulating the luminal pH of axonal endosomes. Regulates phagosome lumenal pH, thus affecting phagosome maturation, and consequently, microbicidal activity in macrophages. Can also be active at the cell surface of specialized cells, e.g., in the inner ear hair bundles uses the high K(+) of the endolymph to regulate intracelular pH. The polypeptide is Sodium/hydrogen exchanger 9 (Homo sapiens (Human)).